The chain runs to 145 residues: Ventricular natriuretic peptide (145 aa).

A signal peptide spans M1–A24. Residues C117 and C133 are joined by a disulfide bond.

The protein belongs to the natriuretic peptide family. Heart atrium and ventricle, and to a very low extent in brain.

It localises to the secreted. Functionally, exhibits natriuretic and vasodepressor activity. The sequence is that of Ventricular natriuretic peptide (vnp) from Acipenser transmontanus (White sturgeon).